A 135-amino-acid polypeptide reads, in one-letter code: Inner membrane protein YgfX (135 aa).

Over 1 to 11 the chain is Cytoplasmic; that stretch reads MVLWQSDLRVS. The interval 1-96 is not required to inhibit FtsZ or MreB polymerization; it reads MVLWQSDLRV…APWMIKSGMM (96 aa). A helical membrane pass occupies residues 12–32; that stretch reads WRAQWLSLLIHGLVAAVILLM. Residues 33–37 lie on the Periplasmic side of the membrane; the sequence is PWPLS. The chain crosses the membrane as a helical span at residues 38–54; it reads YTPLWMVLLSLVVFDCV. Topologically, residues 55–135 are cytoplasmic; the sequence is RSQRRINARQ…RILLQQETQR (81 aa).

As to quaternary structure, interacts with MreB and FtsZ; interaction with the latter requires FtsZ residues 33-49.

It is found in the cell inner membrane. Its function is as follows. A probable inner membrane protein. Has been shown not to be a toxin, no effects on growth are seen in LB or minimal medium up to 6 or 21 hours (respectively) after induction of expression. Interacts with cytoskeletal proteins FtsZ and MreB; inhibits FtsZ GTP-dependent polymerization as well as MreB ATP-dependent polymerization. Restores production of prodigiosin antibiotic (Pig) in Serratia strains with deletions of sdhE-ygfX; overexpression of this protein and CptB also restores Pig production to a slightly lesser extent in Serratia. The chain is Inner membrane protein YgfX from Escherichia coli (strain K12).